A 732-amino-acid chain; its full sequence is DNA gyrase subunit B, mitochondrial (732 aa).

The 108-residue stretch at 513–620 folds into the Toprim domain; it reads SEIFIVEGDS…RYQRALFDAG (108 aa). Mg(2+) contacts are provided by Glu519, Asp593, and Asp595.

Belongs to the type II topoisomerase GyrB family. Made up of two chains. The A chain is responsible for DNA breakage and rejoining; the B chain catalyzes ATP hydrolysis. Mg(2+) is required as a cofactor. Mn(2+) serves as cofactor. Requires Ca(2+) as cofactor.

The protein localises to the mitochondrion. The enzyme catalyses ATP-dependent breakage, passage and rejoining of double-stranded DNA.. In terms of biological role, a type II topoisomerase that negatively supercoils closed circular double-stranded DNA in an ATP-dependent manner. The protein is DNA gyrase subunit B, mitochondrial (GYRBM) of Arabidopsis thaliana (Mouse-ear cress).